Here is a 261-residue protein sequence, read N- to C-terminus: Zinc finger protein 664 (261 aa).

C2H2-type zinc fingers lie at residues 3–25 (YKCPMCREFFSERADLFMHQKVH), 31–53 (HKCDKCDKGFFHISELHIHWRDH), 59–81 (YKCDDCGKDFSTTTKLNRHKKIH), 87–109 (YKCYECGKAFNWSPHLQIHMRVH), 115–137 (YVCSECGRGFSNSSNLCMHQRVH), 143–165 (FKCEECGKAFRHTSSLCMHQRVH), 171–193 (YKCYECGKAFSQSSSLCIHQRVH), 199–221 (YRCCGCGKAFSQSSSLCIHQRVH), and 227–249 (FKCDECGKAFSQSTSLCIHQRVH). Lysine 257 participates in a covalent cross-link: Glycyl lysine isopeptide (Lys-Gly) (interchain with G-Cter in SUMO2).

It belongs to the krueppel C2H2-type zinc-finger protein family. As to expression, expressed in the organ of Corti, stria vascularis, auditory nerve and retina. Lower levels in the tongue, cerebellum, small intestine and kidney.

The protein localises to the nucleus. May be involved in transcriptional regulation. The protein is Zinc finger protein 664 (ZNF664) of Cavia porcellus (Guinea pig).